A 367-amino-acid chain; its full sequence is Secondary metabolism regulator laeA (367 aa).

The interval 1 to 82 is disordered; it reads MFGQQQQQQP…PETYPGHEEN (82 aa). Residues 19–41 show a composition bias toward polar residues; it reads LNHNSRWTPPNESAQPRRSSNAM. 2 stretches are compositionally biased toward basic and acidic residues: residues 47 to 56 and 71 to 82; these read TDRDPAEGHP and KSPETYPGHEEN.

The protein belongs to the methyltransferase superfamily. LaeA methyltransferase family. As to quaternary structure, component of the heterotrimeric velvet complex composed of laeA, veA and velB; VeA acting as a bridging protein between laeA and velB.

It localises to the nucleus. The enzyme catalyses L-methionyl-[protein] + S-adenosyl-L-methionine = S-methyl-L-methionyl-[protein] + S-adenosyl-L-homocysteine. Methyltransferase that performs automethylation. No other methyl-accepting substrate has been identified yet. Component of the velvet transcription factor complex that acts as a global regulator for secondary metabolite gene expression. Controls the expression of the monacolin K gene clusters. Also regulates pigmentation. The polypeptide is Secondary metabolism regulator laeA (Monascus pilosus (Red mold)).